We begin with the raw amino-acid sequence, 409 residues long: Tyrosine--tRNA ligase (409 aa).

The short motif at 54 to 63 is the 'HIGH' region element; it reads PTAPDIHLGH. The short motif at 238-242 is the 'KMSKS' region element; sequence KMSKS. Lys241 provides a ligand contact to ATP. Residues 347-407 enclose the S4 RNA-binding domain; it reads QGILRILREA…GKRKFARVKL (61 aa).

This sequence belongs to the class-I aminoacyl-tRNA synthetase family. TyrS type 2 subfamily. In terms of assembly, homodimer.

The protein resides in the cytoplasm. It catalyses the reaction tRNA(Tyr) + L-tyrosine + ATP = L-tyrosyl-tRNA(Tyr) + AMP + diphosphate + H(+). In terms of biological role, catalyzes the attachment of tyrosine to tRNA(Tyr) in a two-step reaction: tyrosine is first activated by ATP to form Tyr-AMP and then transferred to the acceptor end of tRNA(Tyr). This Bordetella parapertussis (strain 12822 / ATCC BAA-587 / NCTC 13253) protein is Tyrosine--tRNA ligase.